A 637-amino-acid chain; its full sequence is Probable potassium transport system protein Kup 2 (637 aa).

The segment at methionine 1–alanine 21 is disordered. The next 12 helical transmembrane spans lie at leucine 29–phenylalanine 49, valine 68–valine 88, leucine 116–proline 136, valine 150–phenylalanine 170, valine 180–leucine 200, alanine 228–valine 248, isoleucine 258–glycine 278, alanine 300–isoleucine 320, leucine 359–alanine 379, alanine 381–methionine 401, leucine 409–alanine 429, and isoleucine 434–threonine 454.

It belongs to the HAK/KUP transporter (TC 2.A.72) family.

It localises to the cell inner membrane. It catalyses the reaction K(+)(in) + H(+)(in) = K(+)(out) + H(+)(out). Transport of potassium into the cell. Likely operates as a K(+):H(+) symporter. The chain is Probable potassium transport system protein Kup 2 from Mesorhizobium japonicum (strain LMG 29417 / CECT 9101 / MAFF 303099) (Mesorhizobium loti (strain MAFF 303099)).